Here is a 127-residue protein sequence, read N- to C-terminus: Small ribosomal subunit protein uS11 (127 aa).

Belongs to the universal ribosomal protein uS11 family. As to quaternary structure, part of the 30S ribosomal subunit. Interacts with proteins S7 and S18. Binds to IF-3.

Functionally, located on the platform of the 30S subunit, it bridges several disparate RNA helices of the 16S rRNA. Forms part of the Shine-Dalgarno cleft in the 70S ribosome. This is Small ribosomal subunit protein uS11 from Streptococcus gordonii (strain Challis / ATCC 35105 / BCRC 15272 / CH1 / DL1 / V288).